We begin with the raw amino-acid sequence, 320 residues long: MPVTVTRTTITTTTSSSTTVGSARALTQPLGLLRLLQLISTCVAFSLVASVGAWTGPMGNWAMFTWCFCFAVTLIILIVELGGLQAHFPLSWRNFPITFACYAALFCLSSSIIYPTTYVQFLAHGRTRDHAIAATTFSCVACLAYATEVAWTRARPGEITGYMATVPGLLKVFETFVACIIFAFISEPLLYNQKPALEWCVAVYAICFILAGVTILLNLGDCTNVLPIPFPTFLSGLALLSVLFYATAIVLWPLYQFDQRYQGQPRRSMDPSCTRSISYIQPNTVCFWDRRLAVSILTGINLLAYVSDLVYSTRLVFVKV.

2 MARVEL domains span residues 25 to 157 (ALTQ…ARPG) and 162 to 317 (YMAT…RLVF). The next 8 membrane-spanning stretches (helical) occupy residues 35 to 55 (LLQLISTCVAFSLVASVGAWT), 61 to 81 (WAMFTWCFCFAVTLIILIVEL), 95 to 115 (FPITFACYAALFCLSSSIIYP), 131 to 151 (AIAATTFSCVACLAYATEVAW), 165 to 185 (TVPGLLKVFETFVACIIFAFI), 197 to 217 (LEWCVAVYAICFILAGVTILL), 233 to 253 (FLSGLALLSVLFYATAIVLWP), and 292 to 312 (LAVSILTGINLLAYVSDLVYS).

This sequence belongs to the MAL family.

It is found in the membrane. This chain is Myeloid-associated differentiation marker (Myadm), found in Mus musculus (Mouse).